The chain runs to 332 residues: Biotin synthase (332 aa).

The Radical SAM core domain occupies 52–282 (FPENEVEFCS…KAELRLCGGR (231 aa)). The [4Fe-4S] cluster site is built by C70, C74, and C77. Residues C114, C147, C207, and R277 each contribute to the [2Fe-2S] cluster site.

It belongs to the radical SAM superfamily. Biotin synthase family. As to quaternary structure, homodimer. The cofactor is [4Fe-4S] cluster. It depends on [2Fe-2S] cluster as a cofactor.

It carries out the reaction (4R,5S)-dethiobiotin + (sulfur carrier)-SH + 2 reduced [2Fe-2S]-[ferredoxin] + 2 S-adenosyl-L-methionine = (sulfur carrier)-H + biotin + 2 5'-deoxyadenosine + 2 L-methionine + 2 oxidized [2Fe-2S]-[ferredoxin]. It participates in cofactor biosynthesis; biotin biosynthesis; biotin from 7,8-diaminononanoate: step 2/2. Its function is as follows. Catalyzes the conversion of dethiobiotin (DTB) to biotin by the insertion of a sulfur atom into dethiobiotin via a radical-based mechanism. The protein is Biotin synthase of Aquifex aeolicus (strain VF5).